Here is a 561-residue protein sequence, read N- to C-terminus: Excitatory amino acid transporter 4 (561 aa).

The Cytoplasmic portion of the chain corresponds to 1-52 (MSSHGNSLFLRESGAGGGCLQGLQDSLQQRALRTRLRLQTMTREHVRRFLRR). S2 carries the post-translational modification Phosphoserine. 3 helical membrane passes run 53-73 (NAFI…AFAL), 96-116 (MLQM…MASL), and 130-150 (VYYM…VTII). 3 N-linked (GlcNAc...) asparagine glycosylation sites follow: N213, N229, and N236. 3 consecutive transmembrane segments (helical) span residues 259 to 282 (SANG…IGGM), 292 to 319 (FFDS…LFLI), and 341 to 362 (LTVI…YFLV). The discontinuously helical intramembrane region spans 368–398 (FPFIGGILQALITAMGTSSSSATLPITFRCL). 385–387 (SSS) serves as a coordination point for L-aspartate. The helical transmembrane segment at 408-434 (ITRFVLPVGATVNMDGTALYEALAAIF) threads the bilayer. The Na(+) site is built by G416, T418, and N420. Residues T424, 465–469 (IPQAG), D498, and N505 contribute to the L-aspartate site. The discontinuously helical intramembrane region spans 448–481 (ITTISITATAASVGAAGIPQAGLVTMVIVLTSVG). The chain crosses the membrane as a helical span at residues 495–516 (WFLDRLRTMTNVLGDSIGAAVI). N505 and D509 together coordinate Na(+).

This sequence belongs to the dicarboxylate/amino acid:cation symporter (DAACS) (TC 2.A.23) family. SLC1A6 subfamily. As to quaternary structure, homotrimer.

It localises to the cell membrane. The enzyme catalyses K(+)(in) + L-glutamate(out) + 3 Na(+)(out) + H(+)(out) = K(+)(out) + L-glutamate(in) + 3 Na(+)(in) + H(+)(in). The catalysed reaction is K(+)(in) + L-aspartate(out) + 3 Na(+)(out) + H(+)(out) = K(+)(out) + L-aspartate(in) + 3 Na(+)(in) + H(+)(in). It catalyses the reaction D-aspartate(out) + K(+)(in) + 3 Na(+)(out) + H(+)(out) = D-aspartate(in) + K(+)(out) + 3 Na(+)(in) + H(+)(in). In terms of biological role, sodium-dependent, high-affinity amino acid transporter that mediates the uptake of L-glutamate and also L-aspartate and D-aspartate. Functions as a symporter that transports one amino acid molecule together with two or three Na(+) ions and one proton, in parallel with the counter-transport of one K(+) ion. Mediates Cl(-) flux that is not coupled to amino acid transport; this avoids the accumulation of negative charges due to aspartate and Na(+) symport. Plays a redundant role in the rapid removal of released glutamate from the synaptic cleft, which is essential for terminating the postsynaptic action of glutamate. In Rattus norvegicus (Rat), this protein is Excitatory amino acid transporter 4 (Slc1a6).